A 288-amino-acid chain; its full sequence is MAAKIIDGKTIAQQVRSEVAQKVQARVAAGLRAPGLAVVLVGSNPASQIYVASKRKACDEVGFVSRSYDLPETTSEAELLALIDTLNADNTIDGILVQLPLPAGIDNVKVLERIAPDKDVDGFHPYNVGRLCQRAPRLRPCTPRGIVTLLERYNIDTYGLNAVVIGASNIVGRPMSMELLLAGCTTTVTHRFTKDLRHHVEHADLLIVAVGKPGFIPGEWIKEGAIVIDVGINRLENGKVVGDVVFDEAAARASYITPVPGGVGPMTVATLIENTLQACIEYHDPQGK.

NADP(+) is bound by residues 166-168 and isoleucine 232; that span reads GAS.

Belongs to the tetrahydrofolate dehydrogenase/cyclohydrolase family. As to quaternary structure, homodimer.

It carries out the reaction (6R)-5,10-methylene-5,6,7,8-tetrahydrofolate + NADP(+) = (6R)-5,10-methenyltetrahydrofolate + NADPH. The enzyme catalyses (6R)-5,10-methenyltetrahydrofolate + H2O = (6R)-10-formyltetrahydrofolate + H(+). The protein operates within one-carbon metabolism; tetrahydrofolate interconversion. In terms of biological role, catalyzes the oxidation of 5,10-methylenetetrahydrofolate to 5,10-methenyltetrahydrofolate and then the hydrolysis of 5,10-methenyltetrahydrofolate to 10-formyltetrahydrofolate. The chain is Bifunctional protein FolD from Salmonella heidelberg (strain SL476).